A 300-amino-acid chain; its full sequence is Spermine synthase SPE4 (300 aa).

Serine 5 is modified (phosphoserine). One can recognise a PABS domain in the interval 12 to 255; that stretch reads DGWFREINDK…GQLGLIVCSN (244 aa). Residues glutamine 44, aspartate 99, glutamate 119, and 151-152 contribute to the S-adenosyl 3-(methylsulfanyl)propylamine site; that span reads DG. The active-site Proton acceptor is aspartate 174. Residue aspartate 177 coordinates spermidine.

Belongs to the spermidine/spermine synthase family.

It catalyses the reaction S-adenosyl 3-(methylsulfanyl)propylamine + spermidine = spermine + S-methyl-5'-thioadenosine + H(+). It functions in the pathway amine and polyamine biosynthesis; spermine biosynthesis; spermine from spermidine: step 1/1. The protein is Spermine synthase SPE4 (SPE4) of Saccharomyces cerevisiae (strain ATCC 204508 / S288c) (Baker's yeast).